A 427-amino-acid chain; its full sequence is Trigger factor (427 aa).

The 86-residue stretch at 163–248 (GDTVVIDFVG…IHEVKTKEVP (86 aa)) folds into the PPIase FKBP-type domain.

This sequence belongs to the FKBP-type PPIase family. Tig subfamily.

The protein resides in the cytoplasm. It catalyses the reaction [protein]-peptidylproline (omega=180) = [protein]-peptidylproline (omega=0). In terms of biological role, involved in protein export. Acts as a chaperone by maintaining the newly synthesized protein in an open conformation. Functions as a peptidyl-prolyl cis-trans isomerase. The chain is Trigger factor from Streptococcus pyogenes serotype M49 (strain NZ131).